The primary structure comprises 225 residues: Probable septum site-determining protein MinC (225 aa).

This sequence belongs to the MinC family. Interacts with MinD and FtsZ.

In terms of biological role, cell division inhibitor that blocks the formation of polar Z ring septums. Rapidly oscillates between the poles of the cell to destabilize FtsZ filaments that have formed before they mature into polar Z rings. Prevents FtsZ polymerization. The chain is Probable septum site-determining protein MinC from Listeria monocytogenes serotype 4b (strain CLIP80459).